A 281-amino-acid polypeptide reads, in one-letter code: Bis(5'-nucleosyl)-tetraphosphatase, symmetrical (281 aa).

The protein belongs to the Ap4A hydrolase family.

The enzyme catalyses P(1),P(4)-bis(5'-adenosyl) tetraphosphate + H2O = 2 ADP + 2 H(+). In terms of biological role, hydrolyzes diadenosine 5',5'''-P1,P4-tetraphosphate to yield ADP. This chain is Bis(5'-nucleosyl)-tetraphosphatase, symmetrical, found in Delftia acidovorans (strain DSM 14801 / SPH-1).